Here is a 694-residue protein sequence, read N- to C-terminus: Cyclic nucleotide-gated channel alpha-3 (694 aa).

Polar residues-rich tracts occupy residues Met1–Pro11 and Ser112–Ser123. Disordered regions lie at residues Met1–Asp24 and Glu109–Lys152. At Met1 to Arg170 the chain is on the cytoplasmic side. A helical membrane pass occupies residues Trp171 to Phe192. Residues Asp193–Glu198 are Extracellular-facing. Residues Tyr199–Leu219 form a helical membrane-spanning segment. At Val220 to Thr246 the chain is on the cytoplasmic side. A helical membrane pass occupies residues Thr247–Val266. Over Gly267–Tyr270 the chain is Extracellular. Residues Pro271–Phe288 traverse the membrane as a helical segment. Residues Asp289 to Pro298 lie on the Cytoplasmic side of the membrane. The tract at residues Pro298–Met406 is ion conduction pathway. The chain crosses the membrane as a helical span at residues Asn299 to Tyr321. Residues Phe322–Arg347 lie on the Extracellular side of the membrane. N-linked (GalNAc...) asparagine glycosylation is present at Asn339. 2 helical membrane passes run Leu348–Tyr378 and Leu379–Ile403. A selectivity filter region spans residues Thr365–Glu368. The Cytoplasmic segment spans residues Ser404 to Gln694. The interval Ala408–Asp485 is C-linker. Residues Ala488–Lys608 form a cyclic nucleotide-binding domain region. 6 residues coordinate 3',5'-cyclic GMP: Gly548, Glu549, Ser551, Arg564, Thr565, and Asp609. Residues Leu626–Val669 are a coiled coil. The tract at residues Leu662–Gln694 is disordered.

Belongs to the cyclic nucleotide-gated cation channel (TC 1.A.1.5) family. CNGA3 subfamily. Forms heterotetrameric channels composed of CNGA3 and CNGB3 subunits with 3:1 stoichiometry. As to expression, prominently expressed in retina.

The protein localises to the cell membrane. The catalysed reaction is Ca(2+)(in) = Ca(2+)(out). It catalyses the reaction Na(+)(in) = Na(+)(out). It carries out the reaction K(+)(in) = K(+)(out). The enzyme catalyses NH4(+)(in) = NH4(+)(out). The catalysed reaction is Rb(+)(in) = Rb(+)(out). It catalyses the reaction Li(+)(in) = Li(+)(out). It carries out the reaction Cs(+)(in) = Cs(+)(out). With respect to regulation, inhibited by L-cis-diltiazem. Its function is as follows. Pore-forming subunit of the cone cyclic nucleotide-gated channel. Mediates cone photoresponses at bright light converting transient changes in intracellular cGMP levels into electrical signals. In the dark, cGMP levels are high and keep the channel open enabling a steady inward current carried by Na(+) and Ca(2+) ions that leads to membrane depolarization and neurotransmitter release from synaptic terminals. Upon photon absorption cGMP levels decline leading to channel closure and membrane hyperpolarization that ultimately slows neurotransmitter release and signals the presence of light, the end point of the phototransduction cascade. Pore-forming subunit of the gustatory cyclic nucleotide-gated channel. In the taste buds, may sense oral extracellular pH and conduct ion currents that modulate the excitability of taste cells. Conducts cGMP- and cAMP-gated ion currents, with permeability for monovalent and divalent cations. The protein is Cyclic nucleotide-gated channel alpha-3 of Homo sapiens (Human).